A 416-amino-acid polypeptide reads, in one-letter code: NADH-quinone oxidoreductase subunit H (416 aa).

A run of 9 helical transmembrane segments spans residues 16-36 (LILA…LAAI), 84-104 (PVYL…FAVI), 124-144 (LAVA…GIVL), 165-185 (VVSY…YAGT), 197-217 (STWY…SMVG), 260-280 (VSAL…PISL), 288-308 (WWPL…YIWL), 320-340 (FMAI…MIVA), and 353-373 (WASG…VILW).

This sequence belongs to the complex I subunit 1 family. As to quaternary structure, NDH-1 is composed of 14 different subunits. Subunits NuoA, H, J, K, L, M, N constitute the membrane sector of the complex.

Its subcellular location is the cell membrane. The enzyme catalyses a quinone + NADH + 5 H(+)(in) = a quinol + NAD(+) + 4 H(+)(out). In terms of biological role, NDH-1 shuttles electrons from NADH, via FMN and iron-sulfur (Fe-S) centers, to quinones in the respiratory chain. The immediate electron acceptor for the enzyme in this species is believed to be menaquinone. Couples the redox reaction to proton translocation (for every two electrons transferred, four hydrogen ions are translocated across the cytoplasmic membrane), and thus conserves the redox energy in a proton gradient. This subunit may bind ubiquinone. This Mycobacterium sp. (strain KMS) protein is NADH-quinone oxidoreductase subunit H.